The primary structure comprises 821 residues: Phenylalanine--tRNA ligase beta subunit (821 aa).

The tRNA-binding domain occupies 39 to 149 (SENVKGIVLG…EDIALNHNLG (111 aa)). The B5 domain occupies 414–507 (LKKILIPLRR…RLIGYDMFDL (94 aa)). Mg(2+) contacts are provided by aspartate 485, aspartate 491, glutamate 494, and glutamate 495. The region spanning 727–820 (PTVPKMERDI…IEKKFSTKLR (94 aa)) is the FDX-ACB domain.

Belongs to the phenylalanyl-tRNA synthetase beta subunit family. Type 1 subfamily. Tetramer of two alpha and two beta subunits. The cofactor is Mg(2+).

Its subcellular location is the cytoplasm. It catalyses the reaction tRNA(Phe) + L-phenylalanine + ATP = L-phenylalanyl-tRNA(Phe) + AMP + diphosphate + H(+). The chain is Phenylalanine--tRNA ligase beta subunit from Prochlorococcus marinus subsp. pastoris (strain CCMP1986 / NIES-2087 / MED4).